Here is a 212-residue protein sequence, read N- to C-terminus: Transcription antitermination protein NusB (212 aa).

Disordered stretches follow at residues 1-34 (MSDE…SKSN) and 169-212 (EHDR…QAAG). The segment covering 178–212 (APAQPAAKADTATDAVADAATDAAAADDAADQAAG) has biased composition (low complexity).

Belongs to the NusB family.

Functionally, involved in transcription antitermination. Required for transcription of ribosomal RNA (rRNA) genes. Binds specifically to the boxA antiterminator sequence of the ribosomal RNA (rrn) operons. In Delftia acidovorans (strain DSM 14801 / SPH-1), this protein is Transcription antitermination protein NusB.